The following is a 323-amino-acid chain: Thymidylate synthase (323 aa).

Residues arginine 21 and 172 to 173 (RR) contribute to the dUMP site. Cysteine 192 (nucleophile) is an active-site residue. DUMP contacts are provided by residues 214-217 (RSND), asparagine 225, and 255-257 (HVY). Aspartate 217 is a binding site for (6R)-5,10-methylene-5,6,7,8-tetrahydrofolate. Residue alanine 322 participates in (6R)-5,10-methylene-5,6,7,8-tetrahydrofolate binding.

Belongs to the thymidylate synthase family. Bacterial-type ThyA subfamily. In terms of assembly, homodimer.

The protein localises to the cytoplasm. The catalysed reaction is dUMP + (6R)-5,10-methylene-5,6,7,8-tetrahydrofolate = 7,8-dihydrofolate + dTMP. The protein operates within pyrimidine metabolism; dTTP biosynthesis. Catalyzes the reductive methylation of 2'-deoxyuridine-5'-monophosphate (dUMP) to 2'-deoxythymidine-5'-monophosphate (dTMP) while utilizing 5,10-methylenetetrahydrofolate (mTHF) as the methyl donor and reductant in the reaction, yielding dihydrofolate (DHF) as a by-product. This enzymatic reaction provides an intracellular de novo source of dTMP, an essential precursor for DNA biosynthesis. This chain is Thymidylate synthase, found in Pseudomonas syringae pv. tomato (strain ATCC BAA-871 / DC3000).